Here is an 86-residue protein sequence, read N- to C-terminus: MSKGHSLQDPYLNTLRKEKVPVSIYLVNGIKLQGSIESFDQFVVLLKNTVSQMVYKHAISTVVPARPVRLPSPTDGEHGDSEPGNA.

Residues 9 to 68 (DPYLNTLRKEKVPVSIYLVNGIKLQGSIESFDQFVVLLKNTVSQMVYKHAISTVVPARPV) enclose the Sm domain. The interval 67–86 (PVRLPSPTDGEHGDSEPGNA) is disordered. The span at 75-86 (DGEHGDSEPGNA) shows a compositional bias: basic and acidic residues.

The protein belongs to the Hfq family. As to quaternary structure, homohexamer.

Its function is as follows. RNA chaperone that binds small regulatory RNA (sRNAs) and mRNAs to facilitate mRNA translational regulation in response to envelope stress, environmental stress and changes in metabolite concentrations. Also binds with high specificity to tRNAs. The protein is RNA-binding protein Hfq of Pseudomonas putida (strain GB-1).